The following is an 81-amino-acid chain: Putative defensin-like protein 188 (81 aa).

The N-terminal stretch at 1-19 is a signal peptide; it reads MKNSSLLFILIVVFVISSS. 4 disulfide bridges follow: cysteine 31/cysteine 81, cysteine 37/cysteine 57, cysteine 43/cysteine 75, and cysteine 47/cysteine 77.

It belongs to the DEFL family.

The protein resides in the secreted. This Arabidopsis thaliana (Mouse-ear cress) protein is Putative defensin-like protein 188 (LCR41).